The following is a 1690-amino-acid chain: MWSLHIVLMRCSFRLTKSLATGPWSLILILFSVQYVYGSGKKYIGPCGGRDCSVCHCVPEKGSRGPPGPPGPQGPIGPLGAPGPIGLSGEKGMRGDRGPPGAAGDKGDKGPTGVPGFPGLDGIPGHPGPPGPRGKPGMSGHNGSRGDPGFPGGRGALGPGGPLGHPGEKGEKGNSVFILGAVKGIQGDRGDPGLPGLPGSWGAGGPAGPTGYPGEPGLVGPPGQPGRPGLKGNPGVGVKGQMGDPGEVGQQGSPGPTLLVEPPDFCLYKGEKGIKGIPGMVGLPGPPGRKGESGIGAKGEKGIPGFPGPRGDPGSYGSPGFPGLKGELGLVGDPGLFGLIGPKGDPGNRGHPGPPGVLVTPPLPLKGPPGDPGFPGRYGETGDVGPPGPPGLLGRPGEACAGMIGPPGPQGFPGLPGLPGEAGIPGRPDSAPGKPGKPGSPGLPGAPGLQGLPGSSVIYCSVGNPGPQGIKGKVGPPGGRGPKGEKGNEGLCACEPGPMGPPGPPGLPGRQGSKGDLGLPGWLGTKGDPGPPGAEGPPGLPGKHGASGPPGNKGAKGDMVVSRVKGHKGERGPDGPPGFPGQPGSHGRDGHAGEKGDPGPPGDHEDATPGGKGFPGPLGPPGKAGPVGPPGLGFPGPPGERGHPGVPGHPGVRGPDGLKGQKGDTISCNVTYPGRHGPPGFDGPPGPKGFPGPQGAPGLSGSDGHKGRPGTPGTAEIPGPPGFRGDMGDPGFGGEKGSSPVGPPGPPGSPGVNGQKGIPGDPAFGHLGPPGKRGLSGVPGIKGPRGDPGCPGAEGPAGIPGFLGLKGPKGREGHAGFPGVPGPPGHSCERGAPGIPGQPGLPGYPGSPGAPGGKGQPGDVGPPGPAGMKGLPGLPGRPGAHGPPGLPGIPGPFGDDGLPGPPGPKGPRGLPGFPGFPGERGKPGAEGCPGAKGEPGEKGMSGLPGDRGLRGAKGAIGPPGDEGEMAIISQKGTPGEPGPPGDDGFPGERGDKGTPGMQGRRGEPGRYGPPGFHRGEPGEKGQPGPPGPPGPPGSTGLRGFIGFPGLPGDQGEPGSPGPPGFSGIDGARGPKGNKGDPASHFGPPGPKGEPGSPGCPGHFGASGEQGLPGIQGPRGSPGRPGPPGSSGPPGCPGDHGMPGLRGQPGEMGDPGPRGLQGDPGIPGPPGIKGPSGSPGLNGLHGLKGQKGTKGASGLHDVGPPGPVGIPGLKGERGDPGSPGISPPGPRGKKGPPGPPGSSGPPGPAGATGRAPKDIPDPGPPGDQGPPGPDGPRGAPGPPGLPGSVDLLRGEPGDCGLPGPPGPPGPPGPPGYKGFPGCDGKDGQKGPVGFPGPQGPHGFPGPPGEKGLPGPPGRKGPTGLPGPRGEPGPPADVDDCPRIPGLPGAPGMRGPEGAMGLPGMRGPSGPGCKGEPGLDGRRGVDGVPGSPGPPGRKGDTGEDGYPGGPGPPGPIGDPGPKGFGPGYLGGFLLVLHSQTDQEPTCPLGMPRLWTGYSLLYLEGQEKAHNQDLGLAGSCLPVFSTLPFAYCNIHQVCHYAQRNDRSYWLASAAPLPMMPLSEEAIRPYVSRCAVCEAPAQAVAVHSQDQSIPPCPQTWRSLWIGYSFLMHTGAGDQGGGQALMSPGSCLEDFRAAPFLECQGRQGTCHFFANKYSFWLTTVKADLQFSSAPAPDTLKESQAQRQKISRCQVCVKYS.

Positions 1–38 (MWSLHIVLMRCSFRLTKSLATGPWSLILILFSVQYVYG) are cleaved as a signal peptide. The segment at 39–64 (SGKKYIGPCGGRDCSVCHCVPEKGSR) is 7S domain. Disordered stretches follow at residues 61 to 173 (KGSR…GEKG) and 187 to 258 (GDRG…GPTL). Residues 65–1459 (GPPGPPGPQG…IGDPGPKGFG (1395 aa)) form a triple-helical region region. A compositionally biased stretch (pro residues) spans 66-75 (PPGPPGPQGP). The segment covering 76 to 88 (IGPLGAPGPIGLS) has biased composition (low complexity). Positions 94 to 96 (RGD) match the Cell attachment site motif. Asparagine 142 carries an N-linked (GlcNAc...) asparagine glycan. Residues 145 to 147 (RGD) carry the Cell attachment site motif. Over residues 149–164 (GFPGGRGALGPGGPLG) the composition is skewed to gly residues. Residues 189–191 (RGD) carry the Cell attachment site motif. Positions 199–208 (GSWGAGGPAG) are enriched in gly residues. A Cell attachment site motif is present at residues 310–312 (RGD). Disordered stretches follow at residues 369-390 (PGDP…PGPP), 405-451 (GPPG…GLQG), and 469-1457 (GIKG…GPKG). The segment covering 412 to 434 (FPGLPGLPGEAGIPGRPDSAPGK) has biased composition (low complexity). Pro residues-rich tracts occupy residues 498-507 (PMGPPGPPGL) and 529-540 (PGPPGAEGPPGL). Over residues 586–607 (HGRDGHAGEKGDPGPPGDHEDA) the composition is skewed to basic and acidic residues. A compositionally biased stretch (low complexity) spans 644 to 655 (PGVPGHPGVRGP). N-linked (GlcNAc...) asparagine glycosylation is present at asparagine 669. Over residues 681-690 (FDGPPGPKGF) the composition is skewed to pro residues. Short sequence motifs (cell attachment site) lie at residues 724–726 (RGD) and 785–787 (RGD). A compositionally biased stretch (gly residues) spans 849–858 (GAPGGKGQPG). Low complexity-rich tracts occupy residues 866–880 (AGMK…RPGA) and 907–917 (PRGLPGFPGFP). Positions 989-991 (RGD) match the Cell attachment site motif. Residues 1023–1032 (PGPPGPPGPP) are compositionally biased toward pro residues. Positions 1108–1117 (PGIQGPRGSP) are enriched in low complexity. The span at 1119-1131 (RPGPPGSSGPPGC) shows a compositional bias: pro residues. Positions 1212–1214 (RGD) match the Cell attachment site motif. Pro residues-rich tracts occupy residues 1220–1243 (ISPP…PPGP), 1256–1280 (DPGP…PPGL), 1297–1309 (PGPP…PGPP), 1338–1353 (FPGP…PPGR), and 1443–1452 (GPGPPGPIGD). Residues 1465–1690 (GFLLVLHSQT…SRCQVCVKYS (226 aa)) form the Collagen IV NC1 domain. 6 disulfide bridges follow: cysteine 1480–cysteine 1569, cysteine 1513–cysteine 1566, cysteine 1525–cysteine 1531, cysteine 1588–cysteine 1686, cysteine 1622–cysteine 1683, and cysteine 1634–cysteine 1641.

It belongs to the type IV collagen family. There are six type IV collagen isoforms, alpha 1(IV)-alpha 6(IV), each of which can form a triple helix structure with 2 other chains to generate type IV collagen network. The alpha 3(IV) chain forms a triple helical protomer with alpha 4(IV) and alpha 5(IV); this triple helical structure dimerizes through NC1-NC1 domain interactions such that the alpha 3(IV), alpha 4(IV) and alpha 5(IV) chains of one protomer connect with the alpha 5(IV), alpha 4(IV) and alpha 3(IV) chains of the opposite protomer, respectively. Associates with LAMB2 at the neuromuscular junction and in GBM. In terms of processing, prolines at the third position of the tripeptide repeating unit (G-X-Y) are hydroxylated in some or all of the chains. Type IV collagens contain numerous cysteine residues which are involved in inter- and intramolecular disulfide bonding. 12 of these, located in the NC1 domain, are conserved in all known type IV collagens. Post-translationally, the trimeric structure of the NC1 domains is stabilized by covalent bonds between Lys and Met residues. As to expression, expressed in Bruch's membrane, outer plexiform layer, inner nuclear layer, inner plexiform layer, ganglion cell layer, inner limiting membrane and around the blood vessels of the retina (at protein level). Alpha 3 and alpha 4 type IV collagens are colocalized and present in kidney, eye, basement membranes of lens capsule, cochlea, lung, skeletal muscle, aorta, synaptic fibers, fetal kidney and fetal lung. PubMed:8083201 reports similar levels of expression of alpha 3 and alpha 4 type IV collagens in kidney, but PubMed:7523402 reports that in kidney levels of alpha 3 type IV collagen are significantly lower than those of alpha 4 type IV collagen. Highest levels of expression of alpha 4 type IV collagen are detected in kidney, calvaria, neuroretina and cardiac muscle. Lower levels of expression are observed in brain, lung and thymus, and no expression is detected in choroid plexus, liver, adrenal, pancreas, ileum or skin.

Its subcellular location is the secreted. It localises to the extracellular space. It is found in the extracellular matrix. The protein localises to the basement membrane. Type IV collagen is the major structural component of glomerular basement membranes (GBM), forming a 'chicken-wire' meshwork together with laminins, proteoglycans and entactin/nidogen. In Homo sapiens (Human), this protein is Collagen alpha-4(IV) chain (COL4A4).